The sequence spans 107 residues: UPF0122 protein STH1464 (107 aa).

This sequence belongs to the UPF0122 family.

Functionally, might take part in the signal recognition particle (SRP) pathway. This is inferred from the conservation of its genetic proximity to ftsY/ffh. May be a regulatory protein. This chain is UPF0122 protein STH1464, found in Symbiobacterium thermophilum (strain DSM 24528 / JCM 14929 / IAM 14863 / T).